Consider the following 192-residue polypeptide: T-cell surface glycoprotein CD3 epsilon chain (192 aa).

The signal sequence occupies residues 1-21 (MQTGNLWQVLGLCLLLVGAWA). The Extracellular portion of the chain corresponds to 22–111 (QDDTEQNPYE…RVCKNCMEVN (90 aa)). One can recognise an Ig-like domain in the interval 27-98 (QNPYEVSISG…GNTEAAHTLY (72 aa)). A disulfide bridge links cysteine 43 with cysteine 84. A helical membrane pass occupies residues 112 to 137 (LLEVATIIVVDICVTLGLLLLVYYWS). Over 138–192 (KSRKAKATPMTRGAGAGGRPRGQNRERPPPVPNPDYEPIRKGQRDLYSGLNQRGV) the chain is Cytoplasmic. The disordered stretch occupies residues 146 to 192 (PMTRGAGAGGRPRGQNRERPPPVPNPDYEPIRKGQRDLYSGLNQRGV). Positions 160-177 (QNRERPPPVPNPDYEPIR) are NUMB-binding region. The ITAM domain occupies 163–190 (ERPPPVPNPDYEPIRKGQRDLYSGLNQR). The tract at residues 164–171 (RPPPVPNP) is proline-rich sequence. Phosphotyrosine is present on residues tyrosine 173 and tyrosine 184.

In terms of assembly, the TCR-CD3 complex is composed of a CD3D/CD3E and a CD3G/CD3E heterodimers that preferentially associate with TCRalpha and TCRbeta, respectively, to form TCRalpha/CD3E/CD3G and TCRbeta/CD3G/CD3E trimers. In turn, the hexamer interacts with CD3Z homodimer to form the TCR-CD3 complex. Alternatively, TCRalpha and TCRbeta can be replaced by TCRgamma and TCRdelta. Interacts with CD6. Interacts (via Proline-rich sequence) with NCK1; the interaction is ligand dependent but independent of tyrosine kinase activation. In terms of processing, phosphorylated on Tyr residues after T-cell receptor triggering by LCK in association with CD4/CD8.

It is found in the cell membrane. Functionally, part of the TCR-CD3 complex present on T-lymphocyte cell surface that plays an essential role in adaptive immune response. When antigen presenting cells (APCs) activate T-cell receptor (TCR), TCR-mediated signals are transmitted across the cell membrane by the CD3 chains CD3D, CD3E, CD3G and CD3Z. All CD3 chains contain immunoreceptor tyrosine-based activation motifs (ITAMs) in their cytoplasmic domain. Upon TCR engagement, these motifs become phosphorylated by Src family protein tyrosine kinases LCK and FYN, resulting in the activation of downstream signaling pathways. In addition of this role of signal transduction in T-cell activation, CD3E plays an essential role in correct T-cell development. Also participates in internalization and cell surface down-regulation of TCR-CD3 complexes via endocytosis sequences present in CD3E cytosolic region. In addition to its role as a TCR coreceptor, it serves as a receptor for ITPRIPL1. Ligand recognition inhibits T-cell activation by promoting interaction with NCK1, which prevents CD3E-ZAP70 interaction and blocks the ERK-NFkB signaling cascade and calcium influx. This is T-cell surface glycoprotein CD3 epsilon chain (CD3E) from Ovis aries (Sheep).